A 752-amino-acid chain; its full sequence is Multifunctional tryptophan biosynthesis protein (752 aa).

Positions 23-223 constitute a Glutamine amidotransferase type-1 domain; the sequence is NVILIDNYDS…LELTAGTWDN (201 aa). L-glutamine is bound at residue 74 to 76; that stretch reads GPG. Cysteine 102 serves as the catalytic Nucleophile; for GATase activity. L-glutamine contacts are provided by residues glutamine 106 and 152–153; that span reads SL. Catalysis depends on for GATase activity residues histidine 197 and glutamate 199. An indole-3-glycerol phosphate synthase region spans residues 239-503; that stretch reads ILDKIYAHRK…DTSAFVAQLL (265 aa). An N-(5'-phosphoribosyl)anthranilate isomerase region spans residues 519 to 752; that stretch reads LVKICGTRTE…FVKSAKSIRQ (234 aa).

It catalyses the reaction N-(5-phospho-beta-D-ribosyl)anthranilate = 1-(2-carboxyphenylamino)-1-deoxy-D-ribulose 5-phosphate. The catalysed reaction is 1-(2-carboxyphenylamino)-1-deoxy-D-ribulose 5-phosphate + H(+) = (1S,2R)-1-C-(indol-3-yl)glycerol 3-phosphate + CO2 + H2O. The enzyme catalyses chorismate + L-glutamine = anthranilate + pyruvate + L-glutamate + H(+). It functions in the pathway amino-acid biosynthesis; L-tryptophan biosynthesis; L-tryptophan from chorismate: step 1/5. It participates in amino-acid biosynthesis; L-tryptophan biosynthesis; L-tryptophan from chorismate: step 3/5. The protein operates within amino-acid biosynthesis; L-tryptophan biosynthesis; L-tryptophan from chorismate: step 4/5. Functionally, trifunctional enzyme bearing the Gln amidotransferase (GATase) domain of anthranilate synthase, indole-glycerolphosphate synthase, and phosphoribosylanthranilate isomerase activities. The protein is Multifunctional tryptophan biosynthesis protein (trpC) of Penicillium chrysogenum (Penicillium notatum).